Here is a 351-residue protein sequence, read N- to C-terminus: Porphobilinogen deaminase (351 aa).

Position 242 is an S-(dipyrrolylmethanemethyl)cysteine (cysteine 242).

Belongs to the HMBS family. Monomer. Dipyrromethane is required as a cofactor.

The enzyme catalyses 4 porphobilinogen + H2O = hydroxymethylbilane + 4 NH4(+). Its pathway is porphyrin-containing compound metabolism; protoporphyrin-IX biosynthesis; coproporphyrinogen-III from 5-aminolevulinate: step 2/4. Functionally, tetrapolymerization of the monopyrrole PBG into the hydroxymethylbilane pre-uroporphyrinogen in several discrete steps. This is Porphobilinogen deaminase from Rickettsia peacockii (strain Rustic).